A 449-amino-acid chain; its full sequence is Anther-specific proline-rich protein APG (449 aa).

The span at 1-118 (PPKPQPKPPP…KPPAPSPPKP (118 aa)) shows a compositional bias: pro residues. Residues 1-123 (PPKPQPKPPP…SPPKPQNKTI (123 aa)) form a disordered region. Catalysis depends on S132, which acts as the Nucleophile. Active-site residues include D425 and H428.

The protein belongs to the 'GDSL' lipolytic enzyme family. As to expression, found in anther, only in male fertile plants.

The chain is Anther-specific proline-rich protein APG (APG) from Brassica napus (Rape).